The sequence spans 440 residues: Chromosome partition protein MukF (440 aa).

A leucine-zipper region spans residues L208 to I236.

It belongs to the MukF family. As to quaternary structure, interacts, and probably forms a ternary complex, with MukE and MukB via its C-terminal region. The complex formation is stimulated by calcium or magnesium. It is required for an interaction between MukE and MukB.

The protein localises to the cytoplasm. It is found in the nucleoid. Involved in chromosome condensation, segregation and cell cycle progression. May participate in facilitating chromosome segregation by condensation DNA from both sides of a centrally located replisome during cell division. Not required for mini-F plasmid partitioning. Probably acts via its interaction with MukB and MukE. Overexpression results in anucleate cells. It has a calcium binding activity. This Salmonella paratyphi B (strain ATCC BAA-1250 / SPB7) protein is Chromosome partition protein MukF.